We begin with the raw amino-acid sequence, 461 residues long: Ribulose bisphosphate carboxylase (461 aa).

Asn-113 contributes to the substrate binding site. Lys-168 functions as the Proton acceptor in the catalytic mechanism. Residue Lys-170 coordinates substrate. Positions 193, 195, and 196 each coordinate Mg(2+). N6-carboxylysine is present on Lys-193. Catalysis depends on His-289, which acts as the Proton acceptor. Substrate is bound by residues Arg-290, His-323, and Ser-370.

Belongs to the RuBisCO large chain family. Type II subfamily. In terms of assembly, homodimer. Mg(2+) is required as a cofactor.

It carries out the reaction 2 (2R)-3-phosphoglycerate + 2 H(+) = D-ribulose 1,5-bisphosphate + CO2 + H2O. It catalyses the reaction D-ribulose 1,5-bisphosphate + O2 = 2-phosphoglycolate + (2R)-3-phosphoglycerate + 2 H(+). Its function is as follows. RuBisCO catalyzes two reactions: the carboxylation of D-ribulose 1,5-bisphosphate, the primary event in carbon dioxide fixation, as well as the oxidative fragmentation of the pentose substrate. Both reactions occur simultaneously and in competition at the same active site. The sequence is that of Ribulose bisphosphate carboxylase from Thiomonas intermedia (strain K12) (Thiobacillus intermedius).